Consider the following 872-residue polypeptide: Protein SEY1 (872 aa).

Residues 1-749 are Cytoplasmic-facing; sequence MVANGHFAGV…KRSAIGGITQ (749 aa). The region spanning 49 to 307 is the GB1/RHD3-type G domain; sequence GFNYHLISVF…IPADGFAVYA (259 aa). 59-66 is a binding site for GTP; sequence GSQSTGKS. Residues 482–504 adopt a coiled-coil conformation; sequence SNYQQELSLYQKDLENIGGQLRR. Positions 676-704 are disordered; sequence LDKWIGHTPSSATPADEEDLTPIGGVDED. Residues 690–704 show a composition bias toward acidic residues; that stretch reads ADEEDLTPIGGVDED. The chain crosses the membrane as a helical span at residues 750–770; that stretch reads VPLYFYGLLLALGWNEIVAVL. At 771–773 the chain is on the lumenal side; sequence RNP. Residues 774-794 form a helical membrane-spanning segment; the sequence is AYFLLLFVCAVTAYVTYQLNL. The Cytoplasmic portion of the chain corresponds to 795–872; the sequence is WGPIIKMTEA…IDDADDDDDF (78 aa). The segment at 849-872 is disordered; the sequence is NRKSAGGFQNNRSHIDDADDDDDF.

The protein belongs to the TRAFAC class dynamin-like GTPase superfamily. GB1/RHD3 GTPase family. RHD3 subfamily.

Its subcellular location is the endoplasmic reticulum membrane. In terms of biological role, cooperates with the reticulon proteins and tubule-shaping DP1 family proteins to generate and maintain the structure of the tubular endoplasmic reticulum network. Has GTPase activity, which is required for its function in ER organization. This is Protein SEY1 from Paracoccidioides brasiliensis (strain Pb18).